Reading from the N-terminus, the 302-residue chain is 4-diphosphocytidyl-2-C-methyl-D-erythritol kinase (302 aa).

Residue Lys20 is part of the active site. 106–116 (PVASGVGGGSG) provides a ligand contact to ATP. Asp148 is an active-site residue.

Belongs to the GHMP kinase family. IspE subfamily.

It catalyses the reaction 4-CDP-2-C-methyl-D-erythritol + ATP = 4-CDP-2-C-methyl-D-erythritol 2-phosphate + ADP + H(+). It functions in the pathway isoprenoid biosynthesis; isopentenyl diphosphate biosynthesis via DXP pathway; isopentenyl diphosphate from 1-deoxy-D-xylulose 5-phosphate: step 3/6. Its function is as follows. Catalyzes the phosphorylation of the position 2 hydroxy group of 4-diphosphocytidyl-2C-methyl-D-erythritol. The sequence is that of 4-diphosphocytidyl-2-C-methyl-D-erythritol kinase from Bartonella henselae (strain ATCC 49882 / DSM 28221 / CCUG 30454 / Houston 1) (Rochalimaea henselae).